Here is a 68-residue protein sequence, read N- to C-terminus: Neuronal regeneration-related protein (68 aa).

Positions 42–68 (EETGAASLTPPGSREFTSPATSYLHPF) are disordered.

In terms of assembly, interacts with FLNA. Interacts with the latency-associated peptides (LAP) of TGFB1 and TGFB2; the interaction results in a decrease in TGFB autoinduction. In terms of processing, phosphorylated on Ser-59. Phosphorylation decreases stability and activity. As to expression, expressed in brain and fetal lung.

Its subcellular location is the cytoplasm. Functionally, may have roles in cellular differentiation. Ectopic expression induces differentiation of fibroblast into myofibroblast and myofibroblast ameboid migration. Increases retinoic-acid regulation of lipid-droplet biogenesis. May also have neural functions. Promotes axonal regeneration and augments motility of gliomas. Down-regulates the expression of TGFB1 and TGFB2 but not of TGFB3. May play a role in the regulation of alveolar generation. This Mus musculus (Mouse) protein is Neuronal regeneration-related protein (Nrep).